The sequence spans 108 residues: ATP synthase epsilon chain (108 aa).

The protein belongs to the ATPase epsilon chain family. In terms of assembly, F-type ATPases have 2 components, CF(1) - the catalytic core - and CF(0) - the membrane proton channel. CF(1) has five subunits: alpha(3), beta(3), gamma(1), delta(1), epsilon(1). CF(0) has three main subunits: a, b and c.

Its subcellular location is the cell inner membrane. Functionally, produces ATP from ADP in the presence of a proton gradient across the membrane. This chain is ATP synthase epsilon chain, found in Thermotoga maritima (strain ATCC 43589 / DSM 3109 / JCM 10099 / NBRC 100826 / MSB8).